A 648-amino-acid chain; its full sequence is Proton myo-inositol cotransporter (648 aa).

Residues 1–76 are Cytoplasmic-facing; it reads MSRKASENVE…AARRQFQQDE (76 aa). Phosphoserine is present on residues Ser6, Ser47, and Ser50. A helical transmembrane segment spans residues 77–97; it reads TPAFVYVVAVFSALGGFLFGY. Topologically, residues 98-125 are extracellular; sequence DTGVVSGAMLLLKRQLSLDALWQELLVS. A helical transmembrane segment spans residues 126–146; it reads STVGAAAVSALAGGALNGVFG. Topologically, residues 147-148 are cytoplasmic; that stretch reads RR. Residues 149-169 traverse the membrane as a helical segment; sequence AAILLASALFTAGSAVLAAAN. Over 170–178 the chain is Extracellular; that stretch reads NKETLLAGR. Residues 179–199 traverse the membrane as a helical segment; the sequence is LVVGLGIGIASMTVPVYIAEV. Over 200–212 the chain is Cytoplasmic; it reads SPPNLRGRLVTIN. Residues 213–233 traverse the membrane as a helical segment; it reads TLFITGGQFFASVVDGAFSYL. Over 234–239 the chain is Extracellular; sequence QKDGWR. The helical transmembrane segment at 240–260 threads the bilayer; it reads YMLGLAAVPAVIQFFGFLFLP. The Cytoplasmic segment spans residues 261–324; that stretch reads ESPRWLIQKG…RMLSYPPTRR (64 aa). A helical membrane pass occupies residues 325 to 345; sequence ALIVGCGLQMFQQLSGINTIM. Residues 346–363 lie on the Extracellular side of the membrane; sequence YYSATILQMSGVEDDRLA. A helical transmembrane segment spans residues 364–384; that stretch reads IWLASVTAFTNFIFTLVGVWL. The Cytoplasmic segment spans residues 385–393; that stretch reads VEKVGRRKL. A helical membrane pass occupies residues 394-414; it reads TFGSLAGTTVALIILALGFVL. The Extracellular portion of the chain corresponds to 415–508; sequence SAQVSPRITF…NFCPTPYSWT (94 aa). Asn433, Asn458, and Asn485 each carry an N-linked (GlcNAc...) asparagine glycan. Residues 509-529 traverse the membrane as a helical segment; that stretch reads ALLGLILYLVFFAPGMGPMPW. Topologically, residues 530–549 are cytoplasmic; that stretch reads TVNSEIYPLWARSTGNACSS. A helical transmembrane segment spans residues 550-570; sequence GINWIFNVLVSLTFLHTAEYL. Residues 571-573 are Extracellular-facing; the sequence is TYY. A helical membrane pass occupies residues 574–594; the sequence is GAFFLYAGFAAVGLLFIYGCL. At 595–648 the chain is on the cytoplasmic side; the sequence is PETKGKKLEEIESLFDNRLCTCGTSDSDEGRYIEYIRVKGSNYHLSDNDASDVE. Phosphoserine is present on residues Ser640 and Ser645.

Belongs to the major facilitator superfamily. Sugar transporter (TC 2.A.1.1) family. Post-translationally, glycosylated. Predominantly expressed in the brain.

The protein resides in the cell membrane. It carries out the reaction myo-inositol(out) + H(+)(out) = myo-inositol(in) + H(+)(in). Functionally, h(+)-myo-inositol cotransporter. Can also transport related stereoisomers. This is Proton myo-inositol cotransporter from Homo sapiens (Human).